Here is a 99-residue protein sequence, read N- to C-terminus: Integration host factor subunit alpha (99 aa).

It belongs to the bacterial histone-like protein family. Heterodimer of an alpha and a beta chain.

In terms of biological role, this protein is one of the two subunits of integration host factor, a specific DNA-binding protein that functions in genetic recombination as well as in transcriptional and translational control. This is Integration host factor subunit alpha (ihfA) from Mannheimia haemolytica (Pasteurella haemolytica).